Consider the following 585-residue polypeptide: Membrane protein insertase YidC (585 aa).

Helical transmembrane passes span 5–25, 338–358, 362–382, 432–452, 482–502, and 518–538; these read SVTG…FMSP, FGWD…AFTW, FVSN…LVTY, LGGC…FYVF, IPMY…TVFL, and IMLY…PSGL.

The protein belongs to the OXA1/ALB3/YidC family. Type 1 subfamily. In terms of assembly, interacts with the Sec translocase complex via SecD. Specifically interacts with transmembrane segments of nascent integral membrane proteins during membrane integration.

It is found in the cell inner membrane. Functionally, required for the insertion and/or proper folding and/or complex formation of integral membrane proteins into the membrane. Involved in integration of membrane proteins that insert both dependently and independently of the Sec translocase complex, as well as at least some lipoproteins. Aids folding of multispanning membrane proteins. This is Membrane protein insertase YidC from Chlorobium luteolum (strain DSM 273 / BCRC 81028 / 2530) (Pelodictyon luteolum).